The following is a 669-amino-acid chain: NAD-dependent malic enzyme, mitochondrial (669 aa).

Residues 33–43 (IQQSRLYSSNT) are compositionally biased toward polar residues. Residues 33 to 68 (IQQSRLYSSNTRSHKATTTRENTFQKPYSDEEVTKT) form a disordered region. Residue Arg-142 participates in fumarate binding. Tyr-187 serves as the catalytic Proton donor. The active-site Proton acceptor is Lys-259. 3 residues coordinate a divalent metal cation: Glu-330, Asp-331, and Asp-354. NAD(+) contacts are provided by Ala-387 and Ala-390. Residues Asn-499 and Asn-539 each coordinate (S)-malate.

Belongs to the malic enzymes family. The cofactor is Mg(2+). Requires Mn(2+) as cofactor.

It localises to the mitochondrion matrix. It carries out the reaction (S)-malate + NAD(+) = pyruvate + CO2 + NADH. The catalysed reaction is oxaloacetate + H(+) = pyruvate + CO2. Its function is as follows. NAD-dependent mitochondrial malic enzyme that catalyzes the oxidative decarboxylation of malate to pyruvate. The chain is NAD-dependent malic enzyme, mitochondrial (MAE1) from Saccharomyces cerevisiae (strain ATCC 204508 / S288c) (Baker's yeast).